We begin with the raw amino-acid sequence, 866 residues long: Dimethylglycine dehydrogenase, mitochondrial (866 aa).

Residues 1–50 constitute a mitochondrion transit peptide; sequence MLRPGAQLLRGLLLRSCPLQGSPGRPRSVCGREGEEKPPLSAETQWKDRA. Positions 20–42 are disordered; the sequence is QGSPGRPRSVCGREGEEKPPLSA. FAD is bound by residues 59 to 60, 80 to 81, and 87 to 95; these read CV, EK, and GSTWHAAGL. His-91 is modified (tele-8alpha-FAD histidine). Lys-114 is modified (N6-acetyllysine). An N6-acetyllysine; alternate modification is found at Lys-148. Lys-148 is subject to N6-succinyllysine; alternate. Residue Lys-168 is modified to N6-acetyllysine. Val-219 contributes to the FAD binding site. Lys-223 is modified (N6-acetyllysine). Position 251 (Trp-251) interacts with FAD. 2 positions are modified to N6-succinyllysine: Lys-317 and Lys-319. 2 positions are modified to N6-acetyllysine: Lys-335 and Lys-360. Residue 397-402 coordinates FAD; that stretch reads FGYGII. Residues Lys-434 and Lys-523 each carry the N6-acetyllysine; alternate modification. Residues Lys-434 and Lys-523 each carry the N6-succinyllysine; alternate modification. 580 to 582 serves as a coordination point for (6S)-5,6,7,8-tetrahydrofolate; the sequence is ELT. The residue at position 655 (Lys-655) is an N6-acetyllysine; alternate. An N6-succinyllysine; alternate modification is found at Lys-655. Residues Tyr-676, 683–685, and Tyr-744 contribute to the (6S)-5,6,7,8-tetrahydrofolate site; that span reads ELY. Position 764 is an N6-acetyllysine (Lys-764). The residue at position 795 (Lys-795) is an N6-succinyllysine.

Belongs to the GcvT family. In terms of assembly, monomer. FAD is required as a cofactor.

Its subcellular location is the mitochondrion. It carries out the reaction (6S)-5,6,7,8-tetrahydrofolyl-(gamma-L-Glu)(n) + N,N-dimethylglycine + oxidized [electron-transfer flavoprotein] + H(+) = (6R)-5,10-methylenetetrahydrofolyl-(gamma-L-Glu)(n) + sarcosine + reduced [electron-transfer flavoprotein]. It participates in amine and polyamine degradation; betaine degradation; sarcosine from betaine: step 2/2. Functionally, catalyzes the demethylation of N,N-dimethylglycine to sarcosine. Also has activity with sarcosine in vitro. This is Dimethylglycine dehydrogenase, mitochondrial (DMGDH) from Homo sapiens (Human).